The chain runs to 100 residues: Aspartyl/glutamyl-tRNA(Asn/Gln) amidotransferase subunit C (100 aa).

Belongs to the GatC family. Heterotrimer of A, B and C subunits.

It carries out the reaction L-glutamyl-tRNA(Gln) + L-glutamine + ATP + H2O = L-glutaminyl-tRNA(Gln) + L-glutamate + ADP + phosphate + H(+). The enzyme catalyses L-aspartyl-tRNA(Asn) + L-glutamine + ATP + H2O = L-asparaginyl-tRNA(Asn) + L-glutamate + ADP + phosphate + 2 H(+). Allows the formation of correctly charged Asn-tRNA(Asn) or Gln-tRNA(Gln) through the transamidation of misacylated Asp-tRNA(Asn) or Glu-tRNA(Gln) in organisms which lack either or both of asparaginyl-tRNA or glutaminyl-tRNA synthetases. The reaction takes place in the presence of glutamine and ATP through an activated phospho-Asp-tRNA(Asn) or phospho-Glu-tRNA(Gln). The polypeptide is Aspartyl/glutamyl-tRNA(Asn/Gln) amidotransferase subunit C (Staphylococcus epidermidis (strain ATCC 35984 / DSM 28319 / BCRC 17069 / CCUG 31568 / BM 3577 / RP62A)).